A 413-amino-acid polypeptide reads, in one-letter code: MLKEHLDPRKPSGTGYTSKVRVRDKYHIVGFISSGTYGRVYKALGKNGQKGEFAIKKFKPDKEGEIIQYTGLSQSAIREMALCSELDHANVVQLEEIILEDKAIFMVFEYTEHDLLQIIHHHTQPHRHAIPAPMVRSILFQLLNGLLYLHTSWVLHRDLKPANILVTSSGAIRIGDLGLARLFYKPLNSLFSGDKVVVTIWYRAPELLMGSRHYTPAVDLWAVGCIFAELLSLRPIFKGEEAKMDSKKTVPFQRNQMMKIIEIMGLPTKDIWPGIVSMPEYSQLQSLAMSRAPGHFPRSSNLEGWYQSCLKNGGYATSSGAGTPGADGYDLLSRLLEYDPTKRITAQEALEHPYFKNGGPISANCFEGFEGKYPHRRVTQDDNDIRSGSLPGTKRSGLPDDSLMGRASKRLKE.

One can recognise a Protein kinase domain in the interval 26 to 355; the sequence is YHIVGFISSG…AQEALEHPYF (330 aa). Residues 32 to 40 and Lys56 each bind ATP; that span reads ISSGTYGRV. The active-site Proton acceptor is the Asp158. Over residues 376–385 the composition is skewed to basic and acidic residues; it reads RRVTQDDNDI. The disordered stretch occupies residues 376–413; it reads RRVTQDDNDIRSGSLPGTKRSGLPDDSLMGRASKRLKE.

It belongs to the protein kinase superfamily. CMGC Ser/Thr protein kinase family. CDC2/CDKX subfamily. In terms of assembly, component of the srb8-11 complex, a regulatory module of the Mediator complex. Mg(2+) serves as cofactor.

The protein resides in the nucleus. The catalysed reaction is L-seryl-[protein] + ATP = O-phospho-L-seryl-[protein] + ADP + H(+). The enzyme catalyses L-threonyl-[protein] + ATP = O-phospho-L-threonyl-[protein] + ADP + H(+). It catalyses the reaction [DNA-directed RNA polymerase] + ATP = phospho-[DNA-directed RNA polymerase] + ADP + H(+). In terms of biological role, component of the srb8-11 complex. The srb8-11 complex is a regulatory module of the Mediator complex which is itself involved in regulation of basal and activated RNA polymerase II-dependent transcription. The srb8-11 complex may be involved in the transcriptional repression of a subset of genes regulated by Mediator. It may inhibit the association of the Mediator complex with RNA polymerase II to form the holoenzyme complex. The srb8-11 complex phosphorylates the C-terminal domain (CTD) of the largest subunit of RNA polymerase II. The protein is Serine/threonine-protein kinase SSN3 (ssn3) of Aspergillus oryzae (strain ATCC 42149 / RIB 40) (Yellow koji mold).